A 227-amino-acid chain; its full sequence is MAYPFQLGLQDATSPIMEELTNFHDHTLMIVFLISSLVLYIISLMLTTKLTHTSTMDAQEVETIWTILPAVILILIALPSLRILYMMDEINNPALTVKTMGHQWYWSYEYTDYEDLCFDSYMIPTTDLKPGELRLLEVDNRVVLPMELPIRMLISSEDVLHSWAVPSLGLKTDAIPGRLNQATVTSNRPGLFYGQCSEICGSNHSFMPIVLEMVPLKYFENWSASMI.

The Mitochondrial intermembrane portion of the chain corresponds to 1 to 14; it reads MAYPFQLGLQDATS. The chain crosses the membrane as a helical span at residues 15 to 45; the sequence is PIMEELTNFHDHTLMIVFLISSLVLYIISLM. The Mitochondrial matrix portion of the chain corresponds to 46 to 59; sequence LTTKLTHTSTMDAQ. Residues 60–87 form a helical membrane-spanning segment; the sequence is EVETIWTILPAVILILIALPSLRILYMM. The Mitochondrial intermembrane segment spans residues 88–227; it reads DEINNPALTV…YFENWSASMI (140 aa). Residues His161, Cys196, Glu198, Cys200, His204, and Met207 each coordinate Cu cation. Residue Glu198 participates in Mg(2+) binding. Phosphotyrosine is present on Tyr218.

It belongs to the cytochrome c oxidase subunit 2 family. Component of the cytochrome c oxidase (complex IV, CIV), a multisubunit enzyme composed of 14 subunits. The complex is composed of a catalytic core of 3 subunits MT-CO1, MT-CO2 and MT-CO3, encoded in the mitochondrial DNA, and 11 supernumerary subunits COX4I, COX5A, COX5B, COX6A, COX6B, COX6C, COX7A, COX7B, COX7C, COX8 and NDUFA4, which are encoded in the nuclear genome. The complex exists as a monomer or a dimer and forms supercomplexes (SCs) in the inner mitochondrial membrane with NADH-ubiquinone oxidoreductase (complex I, CI) and ubiquinol-cytochrome c oxidoreductase (cytochrome b-c1 complex, complex III, CIII), resulting in different assemblies (supercomplex SCI(1)III(2)IV(1) and megacomplex MCI(2)III(2)IV(2)). Found in a complex with TMEM177, COA6, COX18, COX20, SCO1 and SCO2. Interacts with TMEM177 in a COX20-dependent manner. Interacts with COX20. Interacts with COX16. It depends on Cu cation as a cofactor.

It localises to the mitochondrion inner membrane. The catalysed reaction is 4 Fe(II)-[cytochrome c] + O2 + 8 H(+)(in) = 4 Fe(III)-[cytochrome c] + 2 H2O + 4 H(+)(out). In terms of biological role, component of the cytochrome c oxidase, the last enzyme in the mitochondrial electron transport chain which drives oxidative phosphorylation. The respiratory chain contains 3 multisubunit complexes succinate dehydrogenase (complex II, CII), ubiquinol-cytochrome c oxidoreductase (cytochrome b-c1 complex, complex III, CIII) and cytochrome c oxidase (complex IV, CIV), that cooperate to transfer electrons derived from NADH and succinate to molecular oxygen, creating an electrochemical gradient over the inner membrane that drives transmembrane transport and the ATP synthase. Cytochrome c oxidase is the component of the respiratory chain that catalyzes the reduction of oxygen to water. Electrons originating from reduced cytochrome c in the intermembrane space (IMS) are transferred via the dinuclear copper A center (CU(A)) of subunit 2 and heme A of subunit 1 to the active site in subunit 1, a binuclear center (BNC) formed by heme A3 and copper B (CU(B)). The BNC reduces molecular oxygen to 2 water molecules using 4 electrons from cytochrome c in the IMS and 4 protons from the mitochondrial matrix. In Oenomys hypoxanthus (Rufous-nosed rat), this protein is Cytochrome c oxidase subunit 2 (MT-CO2).